A 274-amino-acid chain; its full sequence is Diaminopimelate epimerase (274 aa).

Substrate-binding residues include Asn-11, Gln-44, and Asn-64. Cys-73 serves as the catalytic Proton donor. Substrate contacts are provided by residues 74 to 75 (GN), Asn-157, Asn-190, and 208 to 209 (ER). Residue Cys-217 is the Proton acceptor of the active site. Residue 218-219 (GS) coordinates substrate.

Belongs to the diaminopimelate epimerase family. In terms of assembly, homodimer.

It is found in the cytoplasm. It catalyses the reaction (2S,6S)-2,6-diaminopimelate = meso-2,6-diaminopimelate. It functions in the pathway amino-acid biosynthesis; L-lysine biosynthesis via DAP pathway; DL-2,6-diaminopimelate from LL-2,6-diaminopimelate: step 1/1. Catalyzes the stereoinversion of LL-2,6-diaminopimelate (L,L-DAP) to meso-diaminopimelate (meso-DAP), a precursor of L-lysine and an essential component of the bacterial peptidoglycan. The polypeptide is Diaminopimelate epimerase (Histophilus somni (strain 129Pt) (Haemophilus somnus)).